Reading from the N-terminus, the 194-residue chain is Pyridoxal 5'-phosphate synthase subunit PdxT (194 aa).

50–52 (GES) serves as a coordination point for L-glutamine. Catalysis depends on cysteine 82, which acts as the Nucleophile. L-glutamine is bound by residues arginine 109 and 136–137 (IR). Catalysis depends on charge relay system residues histidine 172 and glutamate 174.

The protein belongs to the glutaminase PdxT/SNO family. As to quaternary structure, in the presence of PdxS, forms a dodecamer of heterodimers. Only shows activity in the heterodimer.

The catalysed reaction is aldehydo-D-ribose 5-phosphate + D-glyceraldehyde 3-phosphate + L-glutamine = pyridoxal 5'-phosphate + L-glutamate + phosphate + 3 H2O + H(+). It catalyses the reaction L-glutamine + H2O = L-glutamate + NH4(+). Its pathway is cofactor biosynthesis; pyridoxal 5'-phosphate biosynthesis. Functionally, catalyzes the hydrolysis of glutamine to glutamate and ammonia as part of the biosynthesis of pyridoxal 5'-phosphate. The resulting ammonia molecule is channeled to the active site of PdxS. The protein is Pyridoxal 5'-phosphate synthase subunit PdxT of Streptococcus pneumoniae (strain CGSP14).